The following is a 110-amino-acid chain: V-type proton ATPase subunit G 1 (110 aa).

The protein belongs to the V-ATPase G subunit family. As to quaternary structure, V-ATPase is a heteromultimeric enzyme composed of a peripheral catalytic V1 complex (components A to H) attached to an integral membrane V0 proton pore complex (components: a, c, c', c'' and d).

In terms of biological role, catalytic subunit of the peripheral V1 complex of vacuolar ATPase (V-ATPase). V-ATPase is responsible for acidifying a variety of intracellular compartments in eukaryotic cells. The polypeptide is V-type proton ATPase subunit G 1 (VATG1) (Nicotiana tabacum (Common tobacco)).